Here is a 197-residue protein sequence, read N- to C-terminus: Adenylyl-sulfate kinase (197 aa).

33 to 40 (GLSGSGKS) contacts ATP. The active-site Phosphoserine intermediate is S107.

This sequence belongs to the APS kinase family.

The enzyme catalyses adenosine 5'-phosphosulfate + ATP = 3'-phosphoadenylyl sulfate + ADP + H(+). The protein operates within sulfur metabolism; hydrogen sulfide biosynthesis; sulfite from sulfate: step 2/3. In terms of biological role, catalyzes the synthesis of activated sulfate. The chain is Adenylyl-sulfate kinase from Bacillus velezensis (strain DSM 23117 / BGSC 10A6 / LMG 26770 / FZB42) (Bacillus amyloliquefaciens subsp. plantarum).